We begin with the raw amino-acid sequence, 428 residues long: Adenylosuccinate synthetase (428 aa).

GTP-binding positions include 12-18 and 40-42; these read GDEGKGK and GHT. Asp-13 functions as the Proton acceptor in the catalytic mechanism. Asp-13 and Gly-40 together coordinate Mg(2+). IMP contacts are provided by residues 13 to 16, 38 to 41, Thr-128, Arg-142, Gln-223, Thr-238, and Arg-302; these read DEGK and NAGH. His-41 (proton donor) is an active-site residue. 298–304 is a substrate binding site; the sequence is VTTGRPR. Residues Arg-304, 330–332, and 412–414 each bind GTP; these read KLD and GTG.

This sequence belongs to the adenylosuccinate synthetase family. Homodimer. It depends on Mg(2+) as a cofactor.

It localises to the cytoplasm. It carries out the reaction IMP + L-aspartate + GTP = N(6)-(1,2-dicarboxyethyl)-AMP + GDP + phosphate + 2 H(+). The protein operates within purine metabolism; AMP biosynthesis via de novo pathway; AMP from IMP: step 1/2. Plays an important role in the de novo pathway of purine nucleotide biosynthesis. Catalyzes the first committed step in the biosynthesis of AMP from IMP. The chain is Adenylosuccinate synthetase from Bifidobacterium animalis subsp. lactis (strain AD011).